The primary structure comprises 541 residues: Chaperonin GroEL (541 aa).

ATP-binding positions include 29–32 (TIGP), 86–90 (DGTTT), glycine 413, 478–480 (NAA), and aspartate 494.

It belongs to the chaperonin (HSP60) family. Forms a cylinder of 14 subunits composed of two heptameric rings stacked back-to-back. Interacts with the co-chaperonin GroES.

The protein resides in the cytoplasm. It carries out the reaction ATP + H2O + a folded polypeptide = ADP + phosphate + an unfolded polypeptide.. Its function is as follows. Together with its co-chaperonin GroES, plays an essential role in assisting protein folding. The GroEL-GroES system forms a nano-cage that allows encapsulation of the non-native substrate proteins and provides a physical environment optimized to promote and accelerate protein folding. The chain is Chaperonin GroEL from Oenococcus oeni (strain ATCC BAA-331 / PSU-1).